Here is a 546-residue protein sequence, read N- to C-terminus: MSSFQSTAAVRACARRAASTTSAATLASTTCRAAASRIQLQGQRSAGLVPKSWTRFSSSSIANDNQQKMLASHLQTADPVMYDIIEKEKQRQKQFINLIPSENFTSQAVLDALGSPMQNKYSEGYPGARYYGGNEFIDASERLCQDRALETFGLDPKEWGVNVQALSGAPANLYVYSALMDTHDRLMGLDLPHGGHLSHGYQTPTKKISFISKYFETLPYRLDEKTGYIDYNKLEELAITYRPKIIVAGASAYSRLIDYARLREICDKVNAYLMADMAHISGLVAAKVMPGPFTHADIVTTTSHKSLRGPRGAMIFFRRGVRRTNKKGEEELYNLETPINASVFPGHQGGPHNHTIAALAVALKQAQTPEFRAYQSQVLANATALAARLGEPKDKNGLGYTIVSGGTDNHLVLIDLKPQGIDGSRVERVLELVGVAANKNTVPGDKSALTPGGLRIGTPAMTTRGFTEEDFARVADIIDRAVTIAVRINKAAKEDAVKKGNEKAANRVKTFMDYLGNGETDPEIVQLRSEVESWVGTYPCPWDQSS.

The N-terminal 64 residues, 1 to 64 (MSSFQSTAAV…RFSSSSIAND (64 aa)), are a transit peptide targeting the mitochondrion. At K305 the chain carries N6-(pyridoxal phosphate)lysine.

This sequence belongs to the SHMT family. In terms of assembly, homotetramer. Requires pyridoxal 5'-phosphate as cofactor.

It is found in the mitochondrion. It carries out the reaction (6R)-5,10-methylene-5,6,7,8-tetrahydrofolate + glycine + H2O = (6S)-5,6,7,8-tetrahydrofolate + L-serine. Its pathway is one-carbon metabolism; tetrahydrofolate interconversion. Its function is as follows. Interconversion of serine and glycine. The sequence is that of Putative serine hydroxymethyltransferase, mitochondrial (cbs-2) from Neurospora crassa (strain ATCC 24698 / 74-OR23-1A / CBS 708.71 / DSM 1257 / FGSC 987).